We begin with the raw amino-acid sequence, 282 residues long: Acetyl-coenzyme A carboxylase carboxyl transferase subunit beta (282 aa).

Residues 29-282 (LPINCPSCSA…LSSLLGLHQG (254 aa)) form the CoA carboxyltransferase N-terminal domain. Zn(2+) is bound by residues cysteine 33, cysteine 36, cysteine 52, and cysteine 55. The C4-type zinc-finger motif lies at 33–55 (CPSCSARIAAEALQRNLKVCPKC).

Belongs to the AccD/PCCB family. Acetyl-CoA carboxylase is a heterohexamer composed of biotin carboxyl carrier protein (AccB), biotin carboxylase (AccC) and two subunits each of ACCase subunit alpha (AccA) and ACCase subunit beta (AccD). Zn(2+) serves as cofactor.

The protein localises to the cytoplasm. It catalyses the reaction N(6)-carboxybiotinyl-L-lysyl-[protein] + acetyl-CoA = N(6)-biotinyl-L-lysyl-[protein] + malonyl-CoA. It functions in the pathway lipid metabolism; malonyl-CoA biosynthesis; malonyl-CoA from acetyl-CoA: step 1/1. Its function is as follows. Component of the acetyl coenzyme A carboxylase (ACC) complex. Biotin carboxylase (BC) catalyzes the carboxylation of biotin on its carrier protein (BCCP) and then the CO(2) group is transferred by the transcarboxylase to acetyl-CoA to form malonyl-CoA. The sequence is that of Acetyl-coenzyme A carboxylase carboxyl transferase subunit beta from Syntrophomonas wolfei subsp. wolfei (strain DSM 2245B / Goettingen).